Here is a 118-residue protein sequence, read N- to C-terminus: Large ribosomal subunit protein bL20 (118 aa).

The protein belongs to the bacterial ribosomal protein bL20 family.

Functionally, binds directly to 23S ribosomal RNA and is necessary for the in vitro assembly process of the 50S ribosomal subunit. It is not involved in the protein synthesizing functions of that subunit. This chain is Large ribosomal subunit protein bL20, found in Aeromonas hydrophila subsp. hydrophila (strain ATCC 7966 / DSM 30187 / BCRC 13018 / CCUG 14551 / JCM 1027 / KCTC 2358 / NCIMB 9240 / NCTC 8049).